The following is an 88-amino-acid chain: MASLVPLKEKKLMEVKLGELPSWIMMRDFTPSGIAGAFRRGYDRYYNKYINVRKGSISGISMVLAAYVVFSYCISYKELKHERRRKYH.

Ala-2 carries the post-translational modification N-acetylalanine. Ser-3 is subject to Phosphoserine. An N6-acetyllysine modification is found at Lys-16. The chain crosses the membrane as a helical span at residues 62 to 79 (MVLAAYVVFSYCISYKEL).

Belongs to the ATPase F chain family. Component of the ATP synthase complex composed at least of ATP5F1A/subunit alpha, ATP5F1B/subunit beta, ATP5MC1/subunit c (homooctomer), MT-ATP6/subunit a, MT-ATP8/subunit 8, ATP5ME/subunit e, ATP5MF/subunit f, ATP5MG/subunit g, ATP5MK/subunit k, ATP5MJ/subunit j, ATP5F1C/subunit gamma, ATP5F1D/subunit delta, ATP5F1E/subunit epsilon, ATP5PF/subunit F6, ATP5PB/subunit b, ATP5PD/subunit d, ATP5PO/subunit OSCP. ATP synthase complex consists of a soluble F(1) head domain (subunits alpha(3) and beta(3)) - the catalytic core - and a membrane F(0) domain - the membrane proton channel (subunits c, a, 8, e, f, g, k and j). These two domains are linked by a central stalk (subunits gamma, delta, and epsilon) rotating inside the F1 region and a stationary peripheral stalk (subunits F6, b, d, and OSCP).

Its subcellular location is the mitochondrion. It is found in the mitochondrion inner membrane. Subunit f, of the mitochondrial membrane ATP synthase complex (F(1)F(0) ATP synthase or Complex V) that produces ATP from ADP in the presence of a proton gradient across the membrane which is generated by electron transport complexes of the respiratory chain. ATP synthase complex consist of a soluble F(1) head domain - the catalytic core - and a membrane F(1) domain - the membrane proton channel. These two domains are linked by a central stalk rotating inside the F(1) region and a stationary peripheral stalk. During catalysis, ATP synthesis in the catalytic domain of F(1) is coupled via a rotary mechanism of the central stalk subunits to proton translocation. In vivo, can only synthesize ATP although its ATP hydrolase activity can be activated artificially in vitro. Part of the complex F(0) domain. The protein is ATP synthase F(0) complex subunit f, mitochondrial of Mus musculus (Mouse).